Reading from the N-terminus, the 115-residue chain is Large ribosomal subunit protein P2 (115 aa).

M1 bears the N-acetylmethionine mark. S17 and S19 each carry phosphoserine. Residue K21 is modified to N6-acetyllysine; alternate. K21 is subject to N6-succinyllysine; alternate. Residues 76 to 90 (APGSAAPAAGSAPAA) are compositionally biased toward low complexity. The disordered stretch occupies residues 76-115 (APGSAAPAAGSAPAAAEERKEEKKEESEESDDDMGFGLFD). Residues S79 and S86 each carry the phosphoserine modification. Positions 91-101 (AEERKEEKKEE) are enriched in basic and acidic residues. Residues S102 and S105 each carry the phosphoserine modification.

It belongs to the eukaryotic ribosomal protein P1/P2 family. Heterodimer with RPLP1 at the lateral ribosomal stalk of the large ribosomal subunit.

Its function is as follows. Plays an important role in the elongation step of protein synthesis. The protein is Large ribosomal subunit protein P2 (RPLP2) of Equus caballus (Horse).